A 44-amino-acid polypeptide reads, in one-letter code: Photosystem I reaction center subunit IX (44 aa).

A helical membrane pass occupies residues 7–27 (YLSVAPVLSTLWFASLAGLLI).

This sequence belongs to the PsaJ family.

The protein resides in the plastid. Its subcellular location is the chloroplast thylakoid membrane. In terms of biological role, may help in the organization of the PsaE and PsaF subunits. In Barbarea verna (Land cress), this protein is Photosystem I reaction center subunit IX.